The primary structure comprises 302 residues: Homoserine kinase (302 aa).

92–102 (PLARGLGSSAT) contributes to the ATP binding site.

Belongs to the GHMP kinase family. Homoserine kinase subfamily.

The protein resides in the cytoplasm. It catalyses the reaction L-homoserine + ATP = O-phospho-L-homoserine + ADP + H(+). The protein operates within amino-acid biosynthesis; L-threonine biosynthesis; L-threonine from L-aspartate: step 4/5. In terms of biological role, catalyzes the ATP-dependent phosphorylation of L-homoserine to L-homoserine phosphate. The protein is Homoserine kinase of Trichormus variabilis (strain ATCC 29413 / PCC 7937) (Anabaena variabilis).